The sequence spans 264 residues: Thymidylate synthase (264 aa).

Position 21 (Arg-21) interacts with dUMP. Residue His-51 coordinates (6R)-5,10-methylene-5,6,7,8-tetrahydrofolate. 126 to 127 (RR) contacts dUMP. Residue Cys-146 is the Nucleophile of the active site. Residues 166–169 (RSAD), Asn-177, and 207–209 (HLY) each bind dUMP. Asp-169 provides a ligand contact to (6R)-5,10-methylene-5,6,7,8-tetrahydrofolate. Position 263 (Ala-263) interacts with (6R)-5,10-methylene-5,6,7,8-tetrahydrofolate.

The protein belongs to the thymidylate synthase family. Bacterial-type ThyA subfamily. Homodimer.

Its subcellular location is the cytoplasm. The catalysed reaction is dUMP + (6R)-5,10-methylene-5,6,7,8-tetrahydrofolate = 7,8-dihydrofolate + dTMP. Its pathway is pyrimidine metabolism; dTTP biosynthesis. Functionally, catalyzes the reductive methylation of 2'-deoxyuridine-5'-monophosphate (dUMP) to 2'-deoxythymidine-5'-monophosphate (dTMP) while utilizing 5,10-methylenetetrahydrofolate (mTHF) as the methyl donor and reductant in the reaction, yielding dihydrofolate (DHF) as a by-product. This enzymatic reaction provides an intracellular de novo source of dTMP, an essential precursor for DNA biosynthesis. This chain is Thymidylate synthase, found in Chelativorans sp. (strain BNC1).